The chain runs to 209 residues: Orotate phosphoribosyltransferase (209 aa).

5-phospho-alpha-D-ribose 1-diphosphate contacts are provided by residues Arg96, Lys100, His102, and 122-130; that span reads EDLISTGGS. Orotate is bound at residue Ser126.

This sequence belongs to the purine/pyrimidine phosphoribosyltransferase family. PyrE subfamily. As to quaternary structure, homodimer. Mg(2+) serves as cofactor.

The enzyme catalyses orotidine 5'-phosphate + diphosphate = orotate + 5-phospho-alpha-D-ribose 1-diphosphate. It functions in the pathway pyrimidine metabolism; UMP biosynthesis via de novo pathway; UMP from orotate: step 1/2. Catalyzes the transfer of a ribosyl phosphate group from 5-phosphoribose 1-diphosphate to orotate, leading to the formation of orotidine monophosphate (OMP). This Streptococcus pyogenes serotype M5 (strain Manfredo) protein is Orotate phosphoribosyltransferase.